Consider the following 211-residue polypeptide: Urease accessory protein UreF (211 aa).

The segment at 71–93 (DDADRETDARTPAPAARHASRSQ) is disordered.

The protein belongs to the UreF family. UreD, UreF and UreG form a complex that acts as a GTP-hydrolysis-dependent molecular chaperone, activating the urease apoprotein by helping to assemble the nickel containing metallocenter of UreC. The UreE protein probably delivers the nickel.

It localises to the cytoplasm. In terms of biological role, required for maturation of urease via the functional incorporation of the urease nickel metallocenter. The protein is Urease accessory protein UreF of Mycobacterium bovis (strain ATCC BAA-935 / AF2122/97).